An 80-amino-acid chain; its full sequence is MKRILIALVRFYQRFISPVFPPSCRFELTCSNYMIQAIEKHGFKGVLMGLARILRCHPWSKTGKDPVPDHFSLKRNQEGE.

The tract at residues 61–80 is disordered; sequence KTGKDPVPDHFSLKRNQEGE. Residues 62-80 show a composition bias toward basic and acidic residues; sequence TGKDPVPDHFSLKRNQEGE.

It belongs to the UPF0161 family.

The protein resides in the cell membrane. Its function is as follows. Could be involved in insertion of integral membrane proteins into the membrane. The sequence is that of Putative membrane protein insertion efficiency factor from Streptococcus pneumoniae serotype 2 (strain D39 / NCTC 7466).